The following is a 427-amino-acid chain: Gamma-glutamyl phosphate reductase (427 aa).

It belongs to the gamma-glutamyl phosphate reductase family.

It localises to the cytoplasm. It carries out the reaction L-glutamate 5-semialdehyde + phosphate + NADP(+) = L-glutamyl 5-phosphate + NADPH + H(+). The protein operates within amino-acid biosynthesis; L-proline biosynthesis; L-glutamate 5-semialdehyde from L-glutamate: step 2/2. Functionally, catalyzes the NADPH-dependent reduction of L-glutamate 5-phosphate into L-glutamate 5-semialdehyde and phosphate. The product spontaneously undergoes cyclization to form 1-pyrroline-5-carboxylate. This Brucella melitensis biotype 2 (strain ATCC 23457) protein is Gamma-glutamyl phosphate reductase.